The chain runs to 209 residues: MPADTPIRKKPNAYASVVDPDTGYCTPGAFELERLFWHGAPKYTHVNEVWPNLYIGDEKTALDRYSLEKNGFTHILNAAHGRWNVDTGPEYYSDMTVEYYGVEAEDLPSFNLSQFFYPAAQFIHKALSTPNSKLLVNCAMGRSRSASLVLAYLMIYKNMTVVESITQVLKHRCILPNRGFLKQLRELDIKLALEKRDTHGTANKAQKDD.

One can recognise a Tyrosine-protein phosphatase domain in the interval 45–193; sequence HVNEVWPNLY…LRELDIKLAL (149 aa). A substrate-binding site is contributed by 137–144; sequence NCAMGRSR. Residue C138 is the Phosphocysteine intermediate of the active site.

Belongs to the protein-tyrosine phosphatase family. Non-receptor class dual specificity subfamily.

Its subcellular location is the cytoplasm. It localises to the nucleus. It catalyses the reaction O-phospho-L-tyrosyl-[protein] + H2O = L-tyrosyl-[protein] + phosphate. It carries out the reaction O-phospho-L-seryl-[protein] + H2O = L-seryl-[protein] + phosphate. The enzyme catalyses O-phospho-L-threonyl-[protein] + H2O = L-threonyl-[protein] + phosphate. In terms of biological role, dual specificity phosphatase able to dephosphorylate phosphotyrosine, phosphoserine and phosphothreonine residues, with a preference for phosphotyrosine as a substrate. Its function is as follows. Dual specificity phosphatase able to dephosphorylate phosphotyrosine, phosphoserine and phosphothreonine residues within the same substrate, with a preference for phosphotyrosine as a substrate. Involved in the modulation of AMPK and MAPK1/2 signaling pathway. This Xenopus laevis (African clawed frog) protein is Dual specificity phosphatase 29 (dusp29).